Consider the following 437-residue polypeptide: Enolase (437 aa).

Residue Q163 participates in (2R)-2-phosphoglycerate binding. Catalysis depends on E205, which acts as the Proton donor. 3 residues coordinate Mg(2+): D242, E285, and D312. (2R)-2-phosphoglycerate contacts are provided by K337, R366, S367, and K388. Residue K337 is the Proton acceptor of the active site.

Belongs to the enolase family. The cofactor is Mg(2+).

The protein localises to the cytoplasm. Its subcellular location is the secreted. The protein resides in the cell surface. It catalyses the reaction (2R)-2-phosphoglycerate = phosphoenolpyruvate + H2O. Its pathway is carbohydrate degradation; glycolysis; pyruvate from D-glyceraldehyde 3-phosphate: step 4/5. Functionally, catalyzes the reversible conversion of 2-phosphoglycerate (2-PG) into phosphoenolpyruvate (PEP). It is essential for the degradation of carbohydrates via glycolysis. This Nitratidesulfovibrio vulgaris (strain DP4) (Desulfovibrio vulgaris) protein is Enolase.